The chain runs to 271 residues: RxLR effector protein PITG_15679 (271 aa).

The signal sequence occupies residues 1 to 18 (MKVLQLIALTALVSSCVA). The RxLR-dEER motif lies at 49 to 69 (RSLRRYDLEGLDSVNSNREER). The Nudix hydrolase domain maps to 212-271 (RLLSANVVMRLNDKGEKQILLISSSNPKKGDFLLPKGGWDKGEDVKKAALREVIEEGGVR). The short motif at 248–269 (GGWDKGEDVKKAALREVIEEGG) is the Nudix box element.

This sequence in the N-terminal section; belongs to the RxLR effector family. The protein in the C-terminal section; belongs to the Nudix hydrolase family.

Its subcellular location is the secreted. The protein resides in the host cytoplasm. It localises to the host nucleus. Functionally, effector that enhances P.infestans colonization of Nicotiana benthamiana leaves. The chain is RxLR effector protein PITG_15679 from Phytophthora infestans (strain T30-4) (Potato late blight agent).